Reading from the N-terminus, the 862-residue chain is Linoleate 9S-lipoxygenase 1 (862 aa).

The region spanning 44 to 171 (FGAATDIVGG…SYKRDRIFFA (128 aa)) is the PLAT domain. The Lipoxygenase domain maps to 174–862 (TYLPNETPAS…FRGIPNSISI (689 aa)). The disordered stretch occupies residues 225–257 (KNLARTTLGGSSDFPYPRRGRTGRKSTRKDPKC). Basic residues predominate over residues 242 to 251 (RRGRTGRKST). Fe cation-binding residues include His522, His527, His713, Asn717, and Ile862.

Belongs to the lipoxygenase family. As to quaternary structure, monomer. Fe cation serves as cofactor.

The protein resides in the cytoplasm. The catalysed reaction is (9Z,12Z)-octadecadienoate + O2 = (13S)-hydroperoxy-(9Z,11E)-octadecadienoate. The enzyme catalyses (9Z,12Z,15Z)-octadecatrienoate + O2 = (13S)-hydroperoxy-(9Z,11E,15Z)-octadecatrienoate. It catalyses the reaction (9Z,12Z)-octadecadienoate + O2 = (9S)-hydroperoxy-(10E,12Z)-octadecadienoate. It functions in the pathway lipid metabolism; oxylipin biosynthesis. Plant lipoxygenase may be involved in a number of diverse aspects of plant physiology including growth and development, pest resistance, and senescence or responses to wounding. It catalyzes the hydroperoxidation of lipids containing a cis,cis-1,4-pentadiene structure. The protein is Linoleate 9S-lipoxygenase 1 (LOXA) of Phaseolus vulgaris (Kidney bean).